The primary structure comprises 308 residues: Methionyl-tRNA formyltransferase (308 aa).

(6S)-5,6,7,8-tetrahydrofolate is bound at residue 111–114 (SLLP).

This sequence belongs to the Fmt family.

It catalyses the reaction L-methionyl-tRNA(fMet) + (6R)-10-formyltetrahydrofolate = N-formyl-L-methionyl-tRNA(fMet) + (6S)-5,6,7,8-tetrahydrofolate + H(+). Functionally, attaches a formyl group to the free amino group of methionyl-tRNA(fMet). The formyl group appears to play a dual role in the initiator identity of N-formylmethionyl-tRNA by promoting its recognition by IF2 and preventing the misappropriation of this tRNA by the elongation apparatus. In Thermodesulfovibrio yellowstonii (strain ATCC 51303 / DSM 11347 / YP87), this protein is Methionyl-tRNA formyltransferase.